The chain runs to 859 residues: MCAGFYVAVHPWLETQSLHKVGHTGNLAARLHDGSYTTCFTDEWRYCFTLETPTKKDAQKIEAGVLYCAQFFRVKNKELLCLLPEKIKQLAEDVANCLNISYTLCDAPTYEMNDSTIVVEPSSPSDPLISKEKLRHLVITPVEDEDRFADDVLFFSTGETRTTIEDRLYQREAANMGYQELQRSGRAILQMACRCGKTRVAYLILSNYLQGKVLYLVPGLSLLRQTLEKLYLYGISLKNVMLVGSDQTRIVLNHDTIEMTTNPVIIVKRIQEASSLLVIATYQSSTLLVDDFDLIISDECHRICGEWETRPFTHVLLNFKKGHRLFLTATPRYDTPLSMKNRELFGGVAFRYYLREGIEAGYVNDFELQMVAAPKLAHQLSNREETTKQIIVKQIIMALAYLKTNVRSPKMLVFTRDIKQAKELYAELVDLGVYALIAHSTLPRQVILKTFTEFCSSKEPVILLNCRLFQEGVEVPELNAVFFAAPRHSPRDIIQSICRPLNKQVQKPHATIFLPLEVNTENVCLDKFSSIIPFADALASEDPRFYEHLLNPSEVAYPINWIGAHGSVAELLQLARHAIRYGTQGKIDRLTRSERLPWKAAFAELKRTVEICCRYPKINDGFHFGGATLRFDTWYKWVIKSYLQYKNNEPSSLEPYQVLDLESLQDWTTRGVGGPYPWEESMAFLETWLAQNKGELVAIDIHQGGWIGLDATPMERLSGVLTTVSQRDGRSYGKNRKLRPKKGFMIPPQQAKDLDRIFGKHNLKWRKDRDNGFLKEDEHGNYTGEPTCIQEAYQTFKEYVKTNPEYIEKYWPGYAKGKHKHQELPHIWESGLAPPRYKAFKDGNKRLIQRSPKKKDVKN.

The region spanning 178 to 349 (YQELQRSGRA…KNRELFGGVA (172 aa)) is the Helicase ATP-binding domain. 191-198 (MACRCGKT) serves as a coordination point for ATP. The DEAH box motif lies at 298 to 301 (DECH). Positions 394–553 (QIIMALAYLK…RFYEHLLNPS (160 aa)) constitute a Helicase C-terminal domain.

It belongs to the asfivirus helicase A859L family.

The sequence is that of Probable helicase A859L from African swine fever virus (isolate Pig/Kenya/KEN-50/1950) (ASFV).